We begin with the raw amino-acid sequence, 325 residues long: uncharacterized protein (325 aa).

2 disordered regions span residues 32–65 (LSTP…VPPI) and 99–152 (GDSL…ASSG). The region spanning 153–291 (LVPSLNRLRI…LFTGVRDGYY (139 aa)) is the Globin domain.

This is an uncharacterized protein from Caenorhabditis elegans.